The chain runs to 396 residues: Elongation factor Tu (396 aa).

One can recognise a tr-type G domain in the interval 10–206 (KPHVNVGTIG…ALDTYIPTPE (197 aa)). The tract at residues 19 to 26 (GHVDHGKT) is G1. 19–26 (GHVDHGKT) lines the GTP pocket. T26 is a Mg(2+) binding site. The G2 stretch occupies residues 60 to 64 (GITIN). Positions 81–84 (DCPG) are G3. Residues 81-85 (DCPGH) and 136-139 (NKAD) each bind GTP. The interval 136 to 139 (NKAD) is G4. A G5 region spans residues 174–176 (SAK).

It belongs to the TRAFAC class translation factor GTPase superfamily. Classic translation factor GTPase family. EF-Tu/EF-1A subfamily. In terms of assembly, monomer.

The protein localises to the cytoplasm. The enzyme catalyses GTP + H2O = GDP + phosphate + H(+). GTP hydrolase that promotes the GTP-dependent binding of aminoacyl-tRNA to the A-site of ribosomes during protein biosynthesis. The polypeptide is Elongation factor Tu (Bordetella bronchiseptica (strain ATCC BAA-588 / NCTC 13252 / RB50) (Alcaligenes bronchisepticus)).